We begin with the raw amino-acid sequence, 612 residues long: Glutamine--fructose-6-phosphate aminotransferase [isomerizing] (612 aa).

The active-site Nucleophile; for GATase activity is Cys2. The 219-residue stretch at 2–220 (CGIVGAIRAH…DGDIALLASD (219 aa)) folds into the Glutamine amidotransferase type-2 domain. 2 consecutive SIS domains span residues 288–428 (AKSV…VRGL) and 461–602 (WAQQ…VDKP). The For Fru-6P isomerization activity role is filled by Lys607.

As to quaternary structure, homodimer.

It localises to the cytoplasm. The enzyme catalyses D-fructose 6-phosphate + L-glutamine = D-glucosamine 6-phosphate + L-glutamate. Functionally, catalyzes the first step in hexosamine metabolism, converting fructose-6P into glucosamine-6P using glutamine as a nitrogen source. This Neisseria meningitidis serogroup B (strain ATCC BAA-335 / MC58) protein is Glutamine--fructose-6-phosphate aminotransferase [isomerizing].